Consider the following 68-residue polypeptide: MLNRWIKPNEDLDIIISRHVMKKYELQPWSTEVVVHSFMMYADGSVEFNVEIRYDYGEKQVEFKRGFL.

This is an uncharacterized protein from Escherichia coli (Bacteriophage T4).